The following is a 138-amino-acid chain: Large ribosomal subunit protein uL16 (138 aa).

A compositionally biased stretch (basic residues) spans 1 to 16; the sequence is MLIPRRVKHRKQHHPG. Positions 1–24 are disordered; that stretch reads MLIPRRVKHRKQHHPGRSGAATGG.

The protein belongs to the universal ribosomal protein uL16 family. Part of the 50S ribosomal subunit.

In terms of biological role, binds 23S rRNA and is also seen to make contacts with the A and possibly P site tRNAs. The polypeptide is Large ribosomal subunit protein uL16 (Arthrobacter sp. (strain FB24)).